We begin with the raw amino-acid sequence, 120 residues long: Large ribosomal subunit protein bL20 (120 aa).

Belongs to the bacterial ribosomal protein bL20 family.

Functionally, binds directly to 23S ribosomal RNA and is necessary for the in vitro assembly process of the 50S ribosomal subunit. It is not involved in the protein synthesizing functions of that subunit. The protein is Large ribosomal subunit protein bL20 of Karelsulcia muelleri (strain GWSS) (Sulcia muelleri).